A 604-amino-acid chain; its full sequence is Aspartate--tRNA(Asp/Asn) ligase (604 aa).

Position 175 (glutamate 175) interacts with L-aspartate. The aspartate stretch occupies residues 199-202; it reads QQFK. 2 residues coordinate L-aspartate: arginine 221 and histidine 456. Residue 221-223 coordinates ATP; it reads RDE. Position 496 (glutamate 496) interacts with ATP. Arginine 503 is a binding site for L-aspartate. ATP is bound at residue 548–551; the sequence is GVDR.

The protein belongs to the class-II aminoacyl-tRNA synthetase family. Type 1 subfamily. As to quaternary structure, homodimer.

The protein localises to the cytoplasm. It catalyses the reaction tRNA(Asx) + L-aspartate + ATP = L-aspartyl-tRNA(Asx) + AMP + diphosphate. In terms of biological role, aspartyl-tRNA synthetase with relaxed tRNA specificity since it is able to aspartylate not only its cognate tRNA(Asp) but also tRNA(Asn). Reaction proceeds in two steps: L-aspartate is first activated by ATP to form Asp-AMP and then transferred to the acceptor end of tRNA(Asp/Asn). This is Aspartate--tRNA(Asp/Asn) ligase from Methylobacterium sp. (strain 4-46).